Here is a 374-residue protein sequence, read N- to C-terminus: Glutamate 5-kinase (374 aa).

Residue K9 participates in ATP binding. Residues S49, D136, and N148 each contribute to the substrate site. Residues 168–169 and 210–216 contribute to the ATP site; these read TD and TGGMKSK. The region spanning 276 to 354 is the PUA domain; it reads SGVVRIDQGA…DEAKQLIPLV (79 aa).

Belongs to the glutamate 5-kinase family.

The protein resides in the cytoplasm. The catalysed reaction is L-glutamate + ATP = L-glutamyl 5-phosphate + ADP. It participates in amino-acid biosynthesis; L-proline biosynthesis; L-glutamate 5-semialdehyde from L-glutamate: step 1/2. Functionally, catalyzes the transfer of a phosphate group to glutamate to form L-glutamate 5-phosphate. The polypeptide is Glutamate 5-kinase (Halalkalibacterium halodurans (strain ATCC BAA-125 / DSM 18197 / FERM 7344 / JCM 9153 / C-125) (Bacillus halodurans)).